The chain runs to 471 residues: ATP synthase subunit beta, chloroplastic (471 aa).

Residue 151 to 158 (GGAGVGKT) coordinates ATP.

The protein belongs to the ATPase alpha/beta chains family. In terms of assembly, F-type ATPases have 2 components, CF(1) - the catalytic core - and CF(0) - the membrane proton channel. CF(1) has five subunits: alpha(3), beta(3), gamma(1), delta(1), epsilon(1). CF(0) has four main subunits: a(1), b(1), b'(1) and c(9-12).

The protein resides in the plastid. Its subcellular location is the chloroplast thylakoid membrane. It catalyses the reaction ATP + H2O + 4 H(+)(in) = ADP + phosphate + 5 H(+)(out). Functionally, produces ATP from ADP in the presence of a proton gradient across the membrane. The catalytic sites are hosted primarily by the beta subunits. This Rhodomonas salina (Cryptomonas salina) protein is ATP synthase subunit beta, chloroplastic.